Consider the following 57-residue polypeptide: DNA gyrase inhibitor YacG (57 aa).

Zn(2+) is bound by residues Cys10, Cys13, Cys25, and Cys29.

This sequence belongs to the DNA gyrase inhibitor YacG family. In terms of assembly, interacts with GyrB. Zn(2+) is required as a cofactor.

Functionally, inhibits all the catalytic activities of DNA gyrase by preventing its interaction with DNA. Acts by binding directly to the C-terminal domain of GyrB, which probably disrupts DNA binding by the gyrase. The polypeptide is DNA gyrase inhibitor YacG (Brucella abortus (strain 2308)).